The primary structure comprises 339 residues: Heat-inducible transcription repressor HrcA (339 aa).

It belongs to the HrcA family.

Its function is as follows. Negative regulator of class I heat shock genes (grpE-dnaK-dnaJ and groELS operons). Prevents heat-shock induction of these operons. This Thermotoga neapolitana (strain ATCC 49049 / DSM 4359 / NBRC 107923 / NS-E) protein is Heat-inducible transcription repressor HrcA.